A 182-amino-acid polypeptide reads, in one-letter code: LPS-assembly lipoprotein LptE (182 aa).

An N-terminal signal peptide occupies residues methionine 1–glycine 19. Cysteine 20 is lipidated: N-palmitoyl cysteine. Cysteine 20 carries the S-diacylglycerol cysteine lipid modification.

This sequence belongs to the LptE lipoprotein family. In terms of assembly, component of the lipopolysaccharide transport and assembly complex. Interacts with LptD.

It localises to the cell outer membrane. In terms of biological role, together with LptD, is involved in the assembly of lipopolysaccharide (LPS) at the surface of the outer membrane. Required for the proper assembly of LptD. Binds LPS and may serve as the LPS recognition site at the outer membrane. This Photorhabdus laumondii subsp. laumondii (strain DSM 15139 / CIP 105565 / TT01) (Photorhabdus luminescens subsp. laumondii) protein is LPS-assembly lipoprotein LptE.